The chain runs to 83 residues: U-actitoxin-Aeq6b (83 aa).

The N-terminal stretch at 1 to 20 is a signal peptide; sequence MIYKAVFVCLVLVLLGDVFC. Positions 21-36 are excised as a propeptide; sequence SPRNSGGGTLNDNPFE. Proline 82 is subject to Proline amide.

In terms of processing, contains 3 disulfide bonds. Expressed by acrorhagi.

The protein resides in the secreted. It is found in the nematocyst. Toxin. In Actinia equina (Beadlet anemone), this protein is U-actitoxin-Aeq6b.